Here is a 525-residue protein sequence, read N- to C-terminus: Protein-export membrane protein SecD (525 aa).

Transmembrane regions (helical) follow at residues 16-36 (VLLL…KGLT), 368-388 (QAII…YFHY), 395-415 (IPVA…AALI), 421-441 (LPSI…QIVI), 466-486 (AFFI…FLLV), and 488-508 (FVGT…IGVL).

It belongs to the SecD/SecF family. SecD subfamily. Part of the protein translocation apparatus. Forms a complex with SecF.

The protein resides in the cell membrane. Involved in protein export. This is Protein-export membrane protein SecD from Thermococcus gammatolerans (strain DSM 15229 / JCM 11827 / EJ3).